We begin with the raw amino-acid sequence, 770 residues long: Probable capsid and replication-associated protein (770 aa).

Disordered stretches follow at residues 645–682 (QRMQQQPTTTDIFSAGRKRPRRDTEVYHSSQEGEQKES) and 697–717 (WEDSQQEESGSQSSEEETQTV). The span at 646–656 (RMQQQPTTTDI) shows a compositional bias: polar residues. Residues 666 to 681 (RDTEVYHSSQEGEQKE) are compositionally biased toward basic and acidic residues. The span at 703-717 (EESGSQSSEEETQTV) shows a compositional bias: low complexity.

It belongs to the anelloviridae capsid protein family.

The protein localises to the virion. In terms of biological role, may self assemble to form an icosahedral capsid. Presumably essential to initiate and monitor viral genome replication by a rolling circle mechanism. The protein is Probable capsid and replication-associated protein of Homo sapiens (Human).